The following is a 431-amino-acid chain: Histidinol dehydrogenase (431 aa).

NAD(+)-binding residues include Y131, Q193, and N216. Residues S239, Q261, and H264 each contribute to the substrate site. Zn(2+) is bound by residues Q261 and H264. Catalysis depends on proton acceptor residues E329 and H330. H330, D363, E417, and H422 together coordinate substrate. D363 serves as a coordination point for Zn(2+). H422 is a Zn(2+) binding site.

It belongs to the histidinol dehydrogenase family. The cofactor is Zn(2+).

The catalysed reaction is L-histidinol + 2 NAD(+) + H2O = L-histidine + 2 NADH + 3 H(+). The protein operates within amino-acid biosynthesis; L-histidine biosynthesis; L-histidine from 5-phospho-alpha-D-ribose 1-diphosphate: step 9/9. Its function is as follows. Catalyzes the sequential NAD-dependent oxidations of L-histidinol to L-histidinaldehyde and then to L-histidine. The sequence is that of Histidinol dehydrogenase from Clostridium acetobutylicum (strain ATCC 824 / DSM 792 / JCM 1419 / IAM 19013 / LMG 5710 / NBRC 13948 / NRRL B-527 / VKM B-1787 / 2291 / W).